Reading from the N-terminus, the 336-residue chain is MNYKDAGVNIDEGNKLVKMIKPIAKTTLTANVLEGIGGFAGLFEIKNYKNPVLISSTDGVGTKLKIAFMMDKHDTVGIDLVAMCVNDVIVTGAKPLFFLDYFATGKLKSETAVEVIKGIAEGCKIAGCALIGGETAELPGFYKEGEYDLAGFCVGIVEKEELIDTKSIKKGDAIIGLASSGIHSNGYSLVRKVFFEKNNFSVKDFIPELGMNLGDALLTPTKIYVKSIEALKELKIKGMAHITGGGFIDNIPRILRKSIAAKINKGSWKIPTIFNLIQRLGDIEEREMYRTFNMGIGMVVIVDPSDVDKALEKLNGIGEKAYVIGEIVESEGGVIL.

This sequence belongs to the AIR synthase family.

Its subcellular location is the cytoplasm. The enzyme catalyses 2-formamido-N(1)-(5-O-phospho-beta-D-ribosyl)acetamidine + ATP = 5-amino-1-(5-phospho-beta-D-ribosyl)imidazole + ADP + phosphate + H(+). The protein operates within purine metabolism; IMP biosynthesis via de novo pathway; 5-amino-1-(5-phospho-D-ribosyl)imidazole from N(2)-formyl-N(1)-(5-phospho-D-ribosyl)glycinamide: step 2/2. The protein is Phosphoribosylformylglycinamidine cyclo-ligase of Thermoanaerobacter sp. (strain X514).